Here is a 288-residue protein sequence, read N- to C-terminus: Transmembrane protein 163 (288 aa).

Positions 1–64 (MEPALGSERR…ESGQFSDGLE (64 aa)) are disordered. Over 1–87 (MEPALGSERR…HEAQNYRKKA (87 aa)) the chain is Cytoplasmic. Phosphoserine is present on serine 11. Residues 12 to 24 (PPGPGVPRPPPRG) are compositionally biased toward pro residues. A compositionally biased stretch (low complexity) spans 25 to 42 (HAPSTAAPAPSPAPMSSS). The interval 41 to 71 (SSVQSDEERQPRISESGQFSDGLEDRGLLES) is required for interaction with MCOLN1. Phosphoserine is present on residues serine 45, serine 54, serine 56, and serine 60. Residues 88–108 (LWVSWLSIIVTLALAVAAFTV) form a helical membrane-spanning segment. Residues 109–115 (SVMRYSA) are Extracellular-facing. The chain crosses the membrane as a helical span at residues 116-136 (SAFGFAFDAILDVLSSAIVLW). Over 137–149 (RYSNAAAVHSANR) the chain is Cytoplasmic. Residues 150-170 (EYIACVILGVIFLLSSICIVV) traverse the membrane as a helical segment. The Extracellular segment spans residues 171–186 (KAIHDLSTRLLPEVDD). The chain crosses the membrane as a helical span at residues 187 to 207 (FLFSVSILSGILCSVLAVLKF). The Cytoplasmic portion of the chain corresponds to 208–216 (MLGKVLTSR). Residues 217-237 (ALITDGFNSLVGGVMGFSILL) form a helical membrane-spanning segment. At 238-254 (SAEVFKHNAAVWYLDGS) the chain is on the extracellular side. Residues 255–275 (IGVLIGLTIFAYGVKLLIDMV) form a helical membrane-spanning segment. At 276 to 288 (PRVRQTRHYEMFE) the chain is on the cytoplasmic side.

The protein belongs to the TMEM163 family. As to quaternary structure, homodimer. Interacts with MCOLN1. Interacts with SLC30A1, SLC30A2, SLC30A3 and SLC30A4. Widely expressed, with high expression in the brain, cerebellum, heart, lung and spleen. In the brain, mainly expressed in the glutaminergic neuron subpopulations.

Its subcellular location is the cytoplasmic vesicle. The protein resides in the secretory vesicle. It is found in the synaptic vesicle membrane. The protein localises to the early endosome membrane. It localises to the late endosome membrane. Its subcellular location is the lysosome membrane. The protein resides in the cell membrane. It carries out the reaction Zn(2+)(in) = Zn(2+)(out). Zinc ion transporter that mediates zinc efflux and plays a crucial role in intracellular zinc homeostasis. Binds the divalent cations Zn(2+), Ni(2+), and to a minor extent Cu(2+). Is a functional modulator of P2X purinoceptors, including P2RX1, P2RX3, P2RX4 and P2RX7. Plays a role in central nervous system development and is required for myelination, and survival and proliferation of oligodendrocytes. The protein is Transmembrane protein 163 (Tmem163) of Mus musculus (Mouse).